The chain runs to 928 residues: Mitogen-activated protein kinase kinase kinase dlk-1 (928 aa).

Residues 1–72 (MTSTTMVTTL…GQKEGSPDPK (72 aa)) form a disordered region. A compositionally biased stretch (polar residues) spans 42 to 52 (LVTQSAPNTPI). A compositionally biased stretch (basic and acidic residues) spans 53-69 (QHREQANAEFGQKEGSP). In terms of domain architecture, Protein kinase spans 135-377 (ISELEWLGSG…FSHIRQHWEI (243 aa)). Residues 141 to 149 (LGSGSQGAV) and K162 contribute to the ATP site. D246 (proton acceptor) is an active-site residue. The segment at 459-480 (LQGCFTELKLKESELAEWEKDL) is leucine-zipper. Disordered regions lie at residues 483–575 (REQW…DAIR), 644–696 (RRVS…PSRN), and 802–845 (ENAN…SMES). The segment covering 509–519 (GYDDMSSDEDV) has biased composition (acidic residues). Over residues 530–557 (SNTSSSSGVQSSPFSRQSSSRSSAGQQT) the composition is skewed to low complexity. Residues 605-814 (SAGAGSCTAI…NDVDLTSSMD (210 aa)) form an important for interaction between isoform a and isoform c region. Residues 647-656 (STSVNKSTAV) are compositionally biased toward polar residues. The span at 677-695 (SCSSPRSSSKLNRSSYPSR) shows a compositional bias: low complexity. Over residues 823-833 (ADVESSEEDEG) the composition is skewed to acidic residues. A phosphoserine mark is found at S874 and S878. Positions 874-879 (SDGLSD) match the SDGLSD hexapeptide motif.

The protein belongs to the protein kinase superfamily. STE Ser/Thr protein kinase family. MAP kinase kinase kinase subfamily. In terms of assembly, homooligomer (via leucine zipper domain and hexapeptide motif). Isoform a (via leucine zipper domain) forms a heterooligomer with isoform c (via leucine zipper domain). Isoform c does not self-associate. Requires Mg(2+) as cofactor. Ubiquitinated by rpm-1. Negatively regulated by ubiquitination by fsn-1 bound rpm-1, followed by degradation. Post-translationally, phosphorylation at Ser-874 and/or at Ser-878 abolishes interaction with isoform c and promotes binding to isoform a kinase domain (likely in trans) resulting in isoform a self-association and activation. In terms of tissue distribution, expressed in nerve ring, nerve cord, neurons, and pharynx.

It localises to the synapse. It is found in the cytoplasm. Its subcellular location is the cell projection. The protein localises to the axon. The protein resides in the dendrite. It localises to the cilium. It carries out the reaction L-seryl-[protein] + ATP = O-phospho-L-seryl-[protein] + ADP + H(+). It catalyses the reaction L-threonyl-[protein] + ATP = O-phospho-L-threonyl-[protein] + ADP + H(+). Inactive when associated with isoform c. Dissociation from isoform c, which is dependent on the phosphorylation of the C-terminal hexapeptide, results in self-association and activation. Transient increase in Ca(2+) levels caused by axonal injury or synaptic activity triggers the dissociation of isoform a from isoform c; the dissociation may be influenced by the phosphorylation status of the C-terminal hexapeptide. Its function is as follows. Component of a MAP kinase pathway that functions presynaptically to regulate synaptic architecture and presynaptic differentiation. Phosphorylates and activates mkk-4. Has a role in axonal regrowth following injury and synaptogenesis. Plays a role in modulating polymerization of neuronal microtubules. Also promotes tubulin post-translational modifications that protect microtubules. Plays a role in cilium length regulation, possibly by reducing rab-5 mediated endocytosis, and may also have a role in intraflagellar transport in cilia. Plays a role in the formation of muscle connections, also called muscle arm extensions, between the body wall and the motor axons in the dorsal and ventral cord. In terms of biological role, has a role in synapse and axon development, and in axonal regrowth following injury. By forming heterooligomers with isoform a, acts as an inhibitor of isoform a activation. Its inhibitory function is independent of its catalytic activity. In Caenorhabditis elegans, this protein is Mitogen-activated protein kinase kinase kinase dlk-1 (dlk-1).